An 84-amino-acid polypeptide reads, in one-letter code: Small ribosomal subunit protein uS17 (84 aa).

This sequence belongs to the universal ribosomal protein uS17 family. Part of the 30S ribosomal subunit.

One of the primary rRNA binding proteins, it binds specifically to the 5'-end of 16S ribosomal RNA. This chain is Small ribosomal subunit protein uS17, found in Clostridium acetobutylicum (strain ATCC 824 / DSM 792 / JCM 1419 / IAM 19013 / LMG 5710 / NBRC 13948 / NRRL B-527 / VKM B-1787 / 2291 / W).